The following is a 509-amino-acid chain: UDP-N-acetylmuramyl-tripeptide synthetase (509 aa).

ATP is bound at residue 124-130 (GTNGKTS). Residues 164–165 (TT), Ser191, and Arg199 contribute to the UDP-N-acetyl-alpha-D-muramoyl-L-alanyl-D-glutamate site. Position 231 is an N6-carboxylysine (Lys231).

Belongs to the MurCDEF family. MurE subfamily. In terms of processing, carboxylation is probably crucial for Mg(2+) binding and, consequently, for the gamma-phosphate positioning of ATP.

It localises to the cytoplasm. It participates in cell wall biogenesis; peptidoglycan biosynthesis. Catalyzes the addition of an amino acid to the nucleotide precursor UDP-N-acetylmuramoyl-L-alanyl-D-glutamate (UMAG) in the biosynthesis of bacterial cell-wall peptidoglycan. This chain is UDP-N-acetylmuramyl-tripeptide synthetase, found in Tropheryma whipplei (strain TW08/27) (Whipple's bacillus).